We begin with the raw amino-acid sequence, 316 residues long: Probable 5-dehydro-4-deoxyglucarate dehydratase (316 aa).

Belongs to the DapA family.

It catalyses the reaction 5-dehydro-4-deoxy-D-glucarate + H(+) = 2,5-dioxopentanoate + CO2 + H2O. Its pathway is carbohydrate acid metabolism; D-glucarate degradation; 2,5-dioxopentanoate from D-glucarate: step 2/2. This Corynebacterium glutamicum (strain ATCC 13032 / DSM 20300 / JCM 1318 / BCRC 11384 / CCUG 27702 / LMG 3730 / NBRC 12168 / NCIMB 10025 / NRRL B-2784 / 534) protein is Probable 5-dehydro-4-deoxyglucarate dehydratase.